We begin with the raw amino-acid sequence, 580 residues long: Tetratricopeptide repeat protein 39C (580 aa).

3 TPR repeats span residues 312–345 (SLFMFFKGRIQRLECQINSALTSFHTALELAVDQ), 350–383 (HVCLYEIGWCSMIELNFKDAFDSFERLKNESRWS), and 482–515 (GLKHLLLGAIHKCLGNSQDALQFFQRAARDELCR).

Belongs to the TTC39 family.

This chain is Tetratricopeptide repeat protein 39C (Ttc39c), found in Mus musculus (Mouse).